Consider the following 619-residue polypeptide: Translation initiation factor eIF2B subunit delta (619 aa).

The span at Gly-21–Pro-32 shows a compositional bias: basic and acidic residues. The tract at residues Gly-21–Lys-251 is disordered. The segment covering Thr-42 to Pro-56 has biased composition (low complexity). Over residues Leu-57 to Ser-84 the composition is skewed to polar residues. A compositionally biased stretch (low complexity) spans Asn-85–Asn-98. Residues Ala-99 to Asn-125 show a composition bias toward polar residues. The segment covering Ser-136–Gln-199 has biased composition (low complexity). Positions Gln-200–Gln-244 are enriched in basic and acidic residues.

This sequence belongs to the eIF-2B alpha/beta/delta subunits family. In terms of assembly, component of the translation initiation factor 2B (eIF2B) complex which is a heterodecamer of two sets of five different subunits: alpha, beta, gamma, delta and epsilon. Subunits alpha, beta and delta comprise a regulatory subcomplex and subunits epsilon and gamma comprise a catalytic subcomplex. Within the complex, the hexameric regulatory complex resides at the center, with the two heterodimeric catalytic subcomplexes bound on opposite sides.

It is found in the cytoplasm. Its subcellular location is the cytosol. Its function is as follows. Acts as a component of the translation initiation factor 2B (eIF2B) complex, which catalyzes the exchange of GDP for GTP on eukaryotic initiation factor 2 (eIF2) gamma subunit. Its guanine nucleotide exchange factor activity is repressed when bound to eIF2 complex phosphorylated on the alpha subunit, thereby limiting the amount of methionyl-initiator methionine tRNA available to the ribosome and consequently global translation is repressed. In Dictyostelium discoideum (Social amoeba), this protein is Translation initiation factor eIF2B subunit delta (eif2b4).